Here is a 226-residue protein sequence, read N- to C-terminus: Protein GrpE (226 aa).

Disordered regions lie at residues methionine 1 to arginine 24 and glycine 205 to alanine 226. Over residues asparagine 217 to alanine 226 the composition is skewed to polar residues.

It belongs to the GrpE family. Homodimer.

The protein localises to the cytoplasm. Its function is as follows. Participates actively in the response to hyperosmotic and heat shock by preventing the aggregation of stress-denatured proteins, in association with DnaK and GrpE. It is the nucleotide exchange factor for DnaK and may function as a thermosensor. Unfolded proteins bind initially to DnaJ; upon interaction with the DnaJ-bound protein, DnaK hydrolyzes its bound ATP, resulting in the formation of a stable complex. GrpE releases ADP from DnaK; ATP binding to DnaK triggers the release of the substrate protein, thus completing the reaction cycle. Several rounds of ATP-dependent interactions between DnaJ, DnaK and GrpE are required for fully efficient folding. The protein is Protein GrpE of Brucella melitensis biotype 1 (strain ATCC 23456 / CCUG 17765 / NCTC 10094 / 16M).